A 704-amino-acid chain; its full sequence is Mannan-binding lectin serine protease 1 (704 aa).

The first 24 residues, 1-24, serve as a signal peptide directing secretion; the sequence is MRFLSFWRLLLYHALCLALPEVSA. The CUB 1 domain occupies 25–143; it reads HTVELNEMFG…TGFDAHYMAV (119 aa). The interval 25-189 is homodimerization; it reads HTVELNEMFG…HTDNRTCRVE (165 aa). The tract at residues 25 to 189 is interaction with MBL2; it reads HTVELNEMFG…HTDNRTCRVE (165 aa). Residues 25–283 are interaction with FCN2; sequence HTVELNEMFG…STQTHSVQIL (259 aa). Positions 25 to 305 are interaction with MBL1; sequence HTVELNEMFG…RLSYRAAGNE (281 aa). An N-linked (GlcNAc...) asparagine glycan is attached at asparagine 54. Ca(2+) is bound by residues glutamate 73, aspartate 81, aspartate 126, serine 128, aspartate 144, valine 145, and glutamate 147. Cysteine 78 and cysteine 96 form a disulfide bridge. Positions 144–187 constitute an EGF-like; calcium-binding domain; it reads DVDECKEREDEELSCDHYCHNYIGGYYCSCRFGYILHTDNRTCR. 4 disulfides stabilise this stretch: cysteine 148–cysteine 162, cysteine 158–cysteine 171, cysteine 173–cysteine 186, and cysteine 190–cysteine 217. Asparagine 164, tyrosine 165, and glycine 168 together coordinate Ca(2+). Residue asparagine 164 is modified to (3R)-3-hydroxyasparagine. Asparagine 183 carries N-linked (GlcNAc...) asparagine glycosylation. The region spanning 190-302 is the CUB 2 domain; it reads CSGNLFTQRT…RGWRLSYRAA (113 aa). Residues glutamate 240, aspartate 250, aspartate 287, and serine 289 each contribute to the Ca(2+) site. Cysteine 247 and cysteine 265 are oxidised to a cystine. 2 Sushi domains span residues 304-369 and 370-439; these read NECP…TCKI and VDCG…TCLP. Cystine bridges form between cysteine 306-cysteine 354, cysteine 334-cysteine 367, cysteine 372-cysteine 419, cysteine 402-cysteine 437, cysteine 441-cysteine 577, cysteine 480-cysteine 496, cysteine 619-cysteine 636, and cysteine 647-cysteine 677. Residues asparagine 390 and asparagine 412 are each glycosylated (N-linked (GlcNAc...) asparagine). In terms of domain architecture, Peptidase S1 spans 454–701; sequence IFNGRPAQKG…NKDWIQRITG (248 aa). Catalysis depends on charge relay system residues histidine 495 and aspartate 557. Residue serine 651 is the Charge relay system of the active site.

This sequence belongs to the peptidase S1 family. Homodimer. Interacts with the oligomeric lectins MBL2, FCN2 and FCN3; triggers the lectin pathway of complement through activation of C3. Interacts with SERPING1. Interacts with COLEC11; probably triggers the lectin pathway of complement. Post-translationally, the iron and 2-oxoglutarate dependent 3-hydroxylation of aspartate and asparagine is (R) stereospecific within EGF domains. In terms of processing, N-glycosylated. Some N-linked glycan are of the complex-type. Autoproteolytic processing of the proenzyme produces the active enzyme composed on the heavy and the light chain held together by a disulfide bond. Isoform 1 but not isoform 2 is activated through autoproteolytic processing. Protein of the plasma which is primarily expressed by liver.

It is found in the secreted. Its activity is regulated as follows. Inhibited by SERPING1 and A2M. Functionally, functions in the lectin pathway of complement, which performs a key role in innate immunity by recognizing pathogens through patterns of sugar moieties and neutralizing them. The lectin pathway is triggered upon binding of mannan-binding lectin (MBL) and ficolins to sugar moieties which leads to activation of the associated proteases MASP1 and MASP2. Functions as an endopeptidase and may activate MASP2 or C2 or directly activate C3 the key component of complement reaction. Isoform 2 may have an inhibitory effect on the activation of the lectin pathway of complement or may cleave IGFBP5. Also plays a role in development. In Mus musculus (Mouse), this protein is Mannan-binding lectin serine protease 1 (Masp1).